Here is a 355-residue protein sequence, read N- to C-terminus: Methylthioribose-1-phosphate isomerase (355 aa).

Residues 47-49 (RGA), Arg91, and Gln199 contribute to the substrate site. Asp240 serves as the catalytic Proton donor. 250-251 (NK) contacts substrate.

This sequence belongs to the eIF-2B alpha/beta/delta subunits family. MtnA subfamily.

The catalysed reaction is 5-(methylsulfanyl)-alpha-D-ribose 1-phosphate = 5-(methylsulfanyl)-D-ribulose 1-phosphate. The protein operates within amino-acid biosynthesis; L-methionine biosynthesis via salvage pathway; L-methionine from S-methyl-5-thio-alpha-D-ribose 1-phosphate: step 1/6. Functionally, catalyzes the interconversion of methylthioribose-1-phosphate (MTR-1-P) into methylthioribulose-1-phosphate (MTRu-1-P). The protein is Methylthioribose-1-phosphate isomerase of Oleidesulfovibrio alaskensis (strain ATCC BAA-1058 / DSM 17464 / G20) (Desulfovibrio alaskensis).